A 934-amino-acid polypeptide reads, in one-letter code: Desmocollin 2-like protein (934 aa).

Cadherin domains follow at residues 167–274, 274–381, 382–494, and 495–600; these read RWRP…APEF, FTGN…PPTF, KEKL…GPEF, and NPNI…IPVI. Residues 167-716 lie on the Extracellular side of the membrane; sequence RWRPLPFSVV…SASVSLGNYG (550 aa). 3 N-linked (GlcNAc...) asparagine glycosylation sites follow: asparagine 197, asparagine 296, and asparagine 316. N-linked (GlcNAc...) asparagine glycosylation is found at asparagine 509, asparagine 565, and asparagine 569. Residues 717–737 traverse the membrane as a helical segment; it reads ILALVLSGLLLLLLCLFLIFF. Residues 738–934 are Cytoplasmic-facing; it reads CTTKRDKLQI…ICYTTNKTGK (197 aa).

As to expression, expressed at low levels in the brain and heart.

It localises to the cell junction. The protein resides in the desmosome. Its subcellular location is the cell membrane. A component of desmosome cell-cell junctions which are required for positive regulation of cellular adhesion. Involved in the interaction of plaque proteins and intermediate filaments mediating cell-cell adhesion. Involved in the formation and structural organization of desmosome cell-cell junctions during embryonic development. Required for embryogenesis, specifically for progression of epiboly and normal convergence-extension movements during gastrulation. Required for the development of desmosomal-rich midlines in the heart. Plays an important role in ventricular contraction and resulting heart stroke volume. The protein is Desmocollin 2-like protein of Danio rerio (Zebrafish).